We begin with the raw amino-acid sequence, 264 residues long: S-adenosylmethionine decarboxylase proenzyme (264 aa).

S112 (schiff-base intermediate with substrate; via pyruvic acid) is an active-site residue. At S112 the chain carries Pyruvic acid (Ser); by autocatalysis. H117 functions as the Proton acceptor; for processing activity in the catalytic mechanism. C140 functions as the Proton donor; for catalytic activity in the catalytic mechanism.

This sequence belongs to the prokaryotic AdoMetDC family. Type 2 subfamily. As to quaternary structure, heterooctamer of four alpha and four beta chains arranged as a tetramer of alpha/beta heterodimers. Requires pyruvate as cofactor. Is synthesized initially as an inactive proenzyme. Formation of the active enzyme involves a self-maturation process in which the active site pyruvoyl group is generated from an internal serine residue via an autocatalytic post-translational modification. Two non-identical subunits are generated from the proenzyme in this reaction, and the pyruvate is formed at the N-terminus of the alpha chain, which is derived from the carboxyl end of the proenzyme. The post-translation cleavage follows an unusual pathway, termed non-hydrolytic serinolysis, in which the side chain hydroxyl group of the serine supplies its oxygen atom to form the C-terminus of the beta chain, while the remainder of the serine residue undergoes an oxidative deamination to produce ammonia and the pyruvoyl group blocking the N-terminus of the alpha chain.

The catalysed reaction is S-adenosyl-L-methionine + H(+) = S-adenosyl 3-(methylsulfanyl)propylamine + CO2. Its pathway is amine and polyamine biosynthesis; S-adenosylmethioninamine biosynthesis; S-adenosylmethioninamine from S-adenosyl-L-methionine: step 1/1. Functionally, catalyzes the decarboxylation of S-adenosylmethionine to S-adenosylmethioninamine (dcAdoMet), the propylamine donor required for the synthesis of the polyamines spermine and spermidine from the diamine putrescine. The sequence is that of S-adenosylmethionine decarboxylase proenzyme from Yersinia pseudotuberculosis serotype O:1b (strain IP 31758).